Consider the following 450-residue polypeptide: Chromosomal replication initiator protein DnaA (450 aa).

The interval 1–84 (MENIHDLWDR…AVKFIIPPNQ (84 aa)) is domain I, interacts with DnaA modulators. Residues 84–111 (QADEKLELPSSAKKQRKPYEEANDFPQS) form a domain II region. The domain III, AAA+ region stretch occupies residues 112-328 (MLNPKYTFDT…GALIRVVAYS (217 aa)). ATP contacts are provided by glycine 156, glycine 158, lysine 159, and threonine 160. A domain IV, binds dsDNA region spans residues 329–450 (SLINKEITAD…KEIQEKLKQL (122 aa)).

The protein belongs to the DnaA family. Oligomerizes as a right-handed, spiral filament on DNA at oriC.

Its subcellular location is the cytoplasm. Functionally, plays an essential role in the initiation and regulation of chromosomal replication. ATP-DnaA binds to the origin of replication (oriC) to initiate formation of the DNA replication initiation complex once per cell cycle. Binds the DnaA box (a 9 base pair repeat at the origin) and separates the double-stranded (ds)DNA. Forms a right-handed helical filament on oriC DNA; dsDNA binds to the exterior of the filament while single-stranded (ss)DNA is stabiized in the filament's interior. The ATP-DnaA-oriC complex binds and stabilizes one strand of the AT-rich DNA unwinding element (DUE), permitting loading of DNA polymerase. After initiation quickly degrades to an ADP-DnaA complex that is not apt for DNA replication. Binds acidic phospholipids. This Geobacillus thermodenitrificans (strain NG80-2) protein is Chromosomal replication initiator protein DnaA.